A 57-amino-acid chain; its full sequence is UPF0391 membrane protein HNE_2348 (57 aa).

The next 2 helical transmembrane spans lie at 4–24 and 27–47; these read WALT…GGIA and AASI…ITFV.

The protein belongs to the UPF0391 family.

The protein resides in the cell membrane. This is UPF0391 membrane protein HNE_2348 from Hyphomonas neptunium (strain ATCC 15444).